The primary structure comprises 360 residues: Alanine racemase (360 aa).

Lys34 acts as the Proton acceptor; specific for D-alanine in catalysis. Lys34 carries the post-translational modification N6-(pyridoxal phosphate)lysine. Arg129 contributes to the substrate binding site. Tyr254 (proton acceptor; specific for L-alanine) is an active-site residue. Met302 provides a ligand contact to substrate.

It belongs to the alanine racemase family. Pyridoxal 5'-phosphate serves as cofactor.

The catalysed reaction is L-alanine = D-alanine. It functions in the pathway amino-acid biosynthesis; D-alanine biosynthesis; D-alanine from L-alanine: step 1/1. Functionally, catalyzes the interconversion of L-alanine and D-alanine. May also act on other amino acids. The protein is Alanine racemase (alr) of Pectobacterium atrosepticum (strain SCRI 1043 / ATCC BAA-672) (Erwinia carotovora subsp. atroseptica).